The chain runs to 333 residues: uncharacterized protein (333 aa).

It belongs to the polysaccharide synthase family.

This is an uncharacterized protein from Methanocaldococcus jannaschii (strain ATCC 43067 / DSM 2661 / JAL-1 / JCM 10045 / NBRC 100440) (Methanococcus jannaschii).